A 163-amino-acid polypeptide reads, in one-letter code: Pheromone-binding protein 1 (163 aa).

Positions 1–21 (MLGKISLLLLPVFVAINLVHS) are cleaved as a signal peptide. Disulfide bonds link C40/C75, C71/C129, and C118/C138.

Belongs to the PBP/GOBP family. Antenna.

Functionally, this major soluble protein in olfactory sensilla of male moths might serve to solubilize the extremely hydrophobic pheromone molecules and to transport pheromone through the aqueous lymph to receptors located on olfactory cilia. This Antheraea pernyi (Chinese oak silk moth) protein is Pheromone-binding protein 1.